Consider the following 507-residue polypeptide: Ribosomal protein uS12 methylthiotransferase RimO (507 aa).

One can recognise an MTTase N-terminal domain in the interval 13–124 (RRVALLTLGC…ISDRLGAVLA (112 aa)). Residues Cys-22, Cys-58, Cys-87, Cys-205, Cys-209, and Cys-212 each contribute to the [4Fe-4S] cluster site. In terms of domain architecture, Radical SAM core spans 191 to 422 (LDTGPVASLK…ALADELCAQR (232 aa)). The region spanning 424 to 497 (EQRLGSTVQV…GVDLVAVPDA (74 aa)) is the TRAM domain.

This sequence belongs to the methylthiotransferase family. RimO subfamily. [4Fe-4S] cluster serves as cofactor.

The protein resides in the cytoplasm. The catalysed reaction is L-aspartate(89)-[ribosomal protein uS12]-hydrogen + (sulfur carrier)-SH + AH2 + 2 S-adenosyl-L-methionine = 3-methylsulfanyl-L-aspartate(89)-[ribosomal protein uS12]-hydrogen + (sulfur carrier)-H + 5'-deoxyadenosine + L-methionine + A + S-adenosyl-L-homocysteine + 2 H(+). In terms of biological role, catalyzes the methylthiolation of an aspartic acid residue of ribosomal protein uS12. This is Ribosomal protein uS12 methylthiotransferase RimO from Salinispora tropica (strain ATCC BAA-916 / DSM 44818 / JCM 13857 / NBRC 105044 / CNB-440).